A 572-amino-acid chain; its full sequence is Proline--tRNA ligase (572 aa).

It belongs to the class-II aminoacyl-tRNA synthetase family. ProS type 1 subfamily. As to quaternary structure, homodimer.

Its subcellular location is the cytoplasm. It catalyses the reaction tRNA(Pro) + L-proline + ATP = L-prolyl-tRNA(Pro) + AMP + diphosphate. In terms of biological role, catalyzes the attachment of proline to tRNA(Pro) in a two-step reaction: proline is first activated by ATP to form Pro-AMP and then transferred to the acceptor end of tRNA(Pro). As ProRS can inadvertently accommodate and process non-cognate amino acids such as alanine and cysteine, to avoid such errors it has two additional distinct editing activities against alanine. One activity is designated as 'pretransfer' editing and involves the tRNA(Pro)-independent hydrolysis of activated Ala-AMP. The other activity is designated 'posttransfer' editing and involves deacylation of mischarged Ala-tRNA(Pro). The misacylated Cys-tRNA(Pro) is not edited by ProRS. This is Proline--tRNA ligase from Escherichia coli O127:H6 (strain E2348/69 / EPEC).